The sequence spans 284 residues: Bifunctional protein FolD (284 aa).

NADP(+) contacts are provided by residues G164–S166 and S189.

The protein belongs to the tetrahydrofolate dehydrogenase/cyclohydrolase family. As to quaternary structure, homodimer.

It catalyses the reaction (6R)-5,10-methylene-5,6,7,8-tetrahydrofolate + NADP(+) = (6R)-5,10-methenyltetrahydrofolate + NADPH. It carries out the reaction (6R)-5,10-methenyltetrahydrofolate + H2O = (6R)-10-formyltetrahydrofolate + H(+). The protein operates within one-carbon metabolism; tetrahydrofolate interconversion. Functionally, catalyzes the oxidation of 5,10-methylenetetrahydrofolate to 5,10-methenyltetrahydrofolate and then the hydrolysis of 5,10-methenyltetrahydrofolate to 10-formyltetrahydrofolate. The polypeptide is Bifunctional protein FolD (Listeria monocytogenes serovar 1/2a (strain ATCC BAA-679 / EGD-e)).